Consider the following 294-residue polypeptide: NADH-cytochrome b5 reductase 1 (294 aa).

Residues 18–38 (PFIVFATVATIISAFIGYYFL) traverse the membrane as a helical segment. Positions 51 to 154 (DEFQKFPLIE…RGPKGFFTYT (104 aa)) constitute an FAD-binding FR-type domain. FAD is bound by residues 134 to 149 (AGKN…GPKG) and 160 to 192 (SFGM…KIHL).

Belongs to the flavoprotein pyridine nucleotide cytochrome reductase family. In terms of assembly, monomer. Component of the 2-(3-amino-3-carboxypropyl)histidine synthase complex composed of DPH1, DPH2, DPH3 and a NADH-dependent reductase, predominantly CBR1. Requires FAD as cofactor.

It localises to the mitochondrion outer membrane. It catalyses the reaction 2 Fe(III)-[cytochrome b5] + NADH = 2 Fe(II)-[cytochrome b5] + NAD(+) + H(+). It carries out the reaction 2 Fe(3+)-[Dph3] + NADH = 2 Fe(2+)-[Dph3] + NAD(+) + H(+). It functions in the pathway protein modification; peptidyl-diphthamide biosynthesis. In terms of biological role, NADH-dependent reductase for DPH3 and cytochrome b5. Required for the first step of diphthamide biosynthesis, a post-translational modification of histidine which occurs in elongation factor 2. DPH1 and DPH2 transfer a 3-amino-3-carboxypropyl (ACP) group from S-adenosyl-L-methionine (SAM) to a histidine residue, the reaction is assisted by a reduction system comprising DPH3 and a NADH-dependent reductase, predominantly CBR1. By reducing DPH3, also involved in the formation of the tRNA wobble base modification mcm5s 2U (5-methoxycarbonylmethyl-2-thiouridine), mediated by the elongator complex. The cytochrome b5/NADH cytochrome b5 reductase electron transfer system supports the catalytic activity of several sterol biosynthetic enzymes. This chain is NADH-cytochrome b5 reductase 1 (CBR1), found in Candida albicans (strain SC5314 / ATCC MYA-2876) (Yeast).